The chain runs to 394 residues: RILP-like protein 1 (394 aa).

Positions 2-89 (EGISALEKNV…RLERMDRIEK (88 aa)) constitute an RH1 domain. Positions 68 to 327 (EMEELRLELD…EAEEENKLPQ (260 aa)) form a coiled coil. One can recognise an RH2 domain in the interval 282-347 (RPRFTLQELR…IPQESGIKRL (66 aa)).

This sequence belongs to the RILPL family.

It localises to the cytoplasm. Its subcellular location is the cytosol. The protein resides in the cytoskeleton. It is found in the microtubule organizing center. The protein localises to the centrosome. It localises to the cell projection. Its subcellular location is the cilium. In terms of biological role, plays a role in the regulation of cell shape and polarity. Plays a role in cellular protein transport, including protein transport away from primary cilia. Neuroprotective protein. The sequence is that of RILP-like protein 1 (rilpl1) from Xenopus laevis (African clawed frog).